Here is a 243-residue protein sequence, read N- to C-terminus: Probable transcriptional regulatory protein BAV2207 (243 aa).

The disordered stretch occupies residues 1–21 (MAGHSKWANIQHRKGRQDAKR).

Belongs to the TACO1 family.

The protein localises to the cytoplasm. The sequence is that of Probable transcriptional regulatory protein BAV2207 from Bordetella avium (strain 197N).